We begin with the raw amino-acid sequence, 686 residues long: U-box domain-containing protein 19 (686 aa).

A U-box domain is found at 277 to 351 (LNVDDLRCPI…QSYSKQNGVV (75 aa)). 5 ARM repeats span residues 406-445 (TFYRSCLVEAGVVESLMKILRSDDPRIQENAMAGIMNLSK), 448-489 (AGKT…YLSS), 491-533 (GDYS…SLLM), 536-577 (PDNH…KMAE), and 579-620 (PDGM…NLCH).

The catalysed reaction is S-ubiquitinyl-[E2 ubiquitin-conjugating enzyme]-L-cysteine + [acceptor protein]-L-lysine = [E2 ubiquitin-conjugating enzyme]-L-cysteine + N(6)-ubiquitinyl-[acceptor protein]-L-lysine.. Its pathway is protein modification; protein ubiquitination. Its function is as follows. Functions as an E3 ubiquitin ligase. The protein is U-box domain-containing protein 19 (PUB19) of Arabidopsis thaliana (Mouse-ear cress).